The chain runs to 155 residues: Ribosome maturation factor RimP (155 aa).

It belongs to the RimP family.

It is found in the cytoplasm. Its function is as follows. Required for maturation of 30S ribosomal subunits. This Dichelobacter nodosus (strain VCS1703A) protein is Ribosome maturation factor RimP.